A 415-amino-acid chain; its full sequence is MHLVPEGSESMSTQQNGSAQKPVTLNGSASTKGQAPEAPLETPGLIQLAICVLGIYASFLSWGVLQEAITTVNFPVRPPTAEEPNPPTERFTFSIVLNTIQSTFAAITGFLYLYFSTPAGKKVPSIFPTRKILFPLLLVSISSSLASPFGYASLAHIDYLTFILAKSCKLLPVMFLHLTIFRKTYPLYKYGVVLLVTLGVATFTLHHPGTSKKVAASAAKNQSGSSLYGIFLLSINLLLDGLTNTTQDHVFSSPQIYTRFTGPQMMVAQNILSTILTTTYLLVMPHLSSTGALHALLPIPIPPSTETELASAVSFLSRHPEVMKNVLGFAACGAIGQLFIFYTLSRFSSLLLVTVTVTRKMLTMLLSVFWFGHTLSAGQWLGIGLVFGGIGAEAVVQKREKQSKEQAKALTGKKE.

The segment at 1–39 (MHLVPEGSESMSTQQNGSAQKPVTLNGSASTKGQAPEAP) is disordered. Over residues 9–33 (ESMSTQQNGSAQKPVTLNGSASTKG) the composition is skewed to polar residues. 2 N-linked (GlcNAc...) asparagine glycosylation sites follow: N16 and N26. A run of 5 helical transmembrane segments spans residues 45-65 (LIQL…WGVL), 95-115 (IVLN…YLYF), 132-152 (ILFP…FGYA), 161-181 (TFIL…LTIF), and 185-205 (YPLY…TFTL). Residue N221 is glycosylated (N-linked (GlcNAc...) asparagine). The chain crosses the membrane as a helical span at residues 223–243 (SGSSLYGIFLLSINLLLDGLT). N-linked (GlcNAc...) asparagine glycosylation occurs at N244. The next 3 membrane-spanning stretches (helical) occupy residues 281–301 (LLVM…PIPI), 325–345 (NVLG…YTLS), and 368–388 (VFWF…LVFG).

It belongs to the nucleotide-sugar transporter family. SLC35B subfamily.

The protein resides in the endoplasmic reticulum membrane. May be involved in specific transport of UDP-Gal from the cytosol to the Golgi lumen. Involved in the maintenance of optimal conditions for the folding of secretory pathway proteins in the endoplasmic reticulum. This is UDP-galactose transporter homolog 1 (hut1) from Aspergillus fumigatus (strain ATCC MYA-4609 / CBS 101355 / FGSC A1100 / Af293) (Neosartorya fumigata).